A 227-amino-acid polypeptide reads, in one-letter code: Enolase-phosphatase E1 (227 aa).

This sequence belongs to the HAD-like hydrolase superfamily. MasA/MtnC family. Monomer. Mg(2+) serves as cofactor.

The catalysed reaction is 5-methylsulfanyl-2,3-dioxopentyl phosphate + H2O = 1,2-dihydroxy-5-(methylsulfanyl)pent-1-en-3-one + phosphate. It participates in amino-acid biosynthesis; L-methionine biosynthesis via salvage pathway; L-methionine from S-methyl-5-thio-alpha-D-ribose 1-phosphate: step 3/6. It functions in the pathway amino-acid biosynthesis; L-methionine biosynthesis via salvage pathway; L-methionine from S-methyl-5-thio-alpha-D-ribose 1-phosphate: step 4/6. Its function is as follows. Bifunctional enzyme that catalyzes the enolization of 2,3-diketo-5-methylthiopentyl-1-phosphate (DK-MTP-1-P) into the intermediate 2-hydroxy-3-keto-5-methylthiopentenyl-1-phosphate (HK-MTPenyl-1-P), which is then dephosphorylated to form the acireductone 1,2-dihydroxy-3-keto-5-methylthiopentene (DHK-MTPene). This chain is Enolase-phosphatase E1, found in Persephonella marina (strain DSM 14350 / EX-H1).